The sequence spans 297 residues: 2-dehydropantoate 2-reductase (297 aa).

NADP(+) is bound by residues 11-16 (GAGAMG), Asn107, and Ala133. Asn107 provides a ligand contact to substrate. Catalysis depends on Lys187, which acts as the Proton donor. Positions 191, 195, 205, and 251 each coordinate substrate. Glu263 lines the NADP(+) pocket.

Belongs to the ketopantoate reductase family.

The protein resides in the cytoplasm. It catalyses the reaction (R)-pantoate + NADP(+) = 2-dehydropantoate + NADPH + H(+). The protein operates within cofactor biosynthesis; (R)-pantothenate biosynthesis; (R)-pantoate from 3-methyl-2-oxobutanoate: step 2/2. Functionally, catalyzes the NADPH-dependent reduction of ketopantoate into pantoic acid. The chain is 2-dehydropantoate 2-reductase from Listeria monocytogenes serovar 1/2a (strain ATCC BAA-679 / EGD-e).